The primary structure comprises 480 residues: Glycerol-3-phosphate transporter (480 aa).

Residues 1–36 (MFGPFKPAPHIAELPAEKIDSTYKRLRWQVFAGIFF) lie on the Cytoplasmic side of the membrane. Residues 37–57 (GYAAYYFVRANFDLAQPGLIQ) traverse the membrane as a helical segment. Residues 58 to 64 (AGLYSKA) are Periplasmic-facing. Residues 65-85 (ELGVIGSAAGLAYGLSKFVMA) traverse the membrane as a helical segment. Residues 86–94 (GMSDRSNPR) lie on the Cytoplasmic side of the membrane. The helical transmembrane segment at 95–113 (VFLPFGLLLSGLCMTLMGL) threads the bilayer. Residues 114–121 (FPWATSGI) are Periplasmic-facing. A helical transmembrane segment spans residues 122–142 (AIMWVMIFLNGWFQGMGWPPC). Topologically, residues 143-161 (GRTMVHWWSKSERGTIVSI) are cytoplasmic. Residues 162–181 (WNTAHNIGGMVPGAMVLLAS) traverse the membrane as a helical segment. The Periplasmic portion of the chain corresponds to 182 to 201 (AIFFSTHGIEAQAKDVWQQS). The helical transmembrane segment at 202–219 (LYFPGIAAMIFAIPVYFV) threads the bilayer. The Cytoplasmic segment spans residues 220–274 (MRDTPQSCGLPSIEKWRNDYPDDYNEKTYENDLTAKEIFVTYVLKNKLLWYIAIA). The chain crosses the membrane as a helical span at residues 275–295 (NVFVYLIRYGVLKWSPVYLSE). At 296–300 (VKHFN) the chain is on the periplasmic side. Residues 301–321 (IKGTAWAYTIYELAAVPGTLL) form a helical membrane-spanning segment. Topologically, residues 322–334 (CGWVSDKVFKGKR) are cytoplasmic. Residues 335-354 (GLTGFIFMILTTAAVVAYWM) traverse the membrane as a helical segment. Residues 355–359 (NPATP) are Periplasmic-facing. A helical membrane pass occupies residues 360–396 (EAELANYSAWYENPYQLTDFVLMTLIGFLIYGPVMLI). Residues 397–415 (GLHALELAPKKAAGTAAGF) lie on the Cytoplasmic side of the membrane. The chain crosses the membrane as a helical span at residues 416–437 (TGLFGYLGGTVSASAVIGWAAQ). Topologically, residues 438–442 (HYGWD) are periplasmic. The helical transmembrane segment at 443–463 (GGFYVMIGGGVLAVLLLLIVM) threads the bilayer. Residues 464 to 479 (VEEGKHKAKLGDTYGT) lie on the Cytoplasmic side of the membrane.

It belongs to the major facilitator superfamily. Organophosphate:Pi antiporter (OPA) (TC 2.A.1.4) family.

It localises to the cell inner membrane. Its function is as follows. Responsible for glycerol-3-phosphate uptake. This is Glycerol-3-phosphate transporter (glpT) from Haemophilus influenzae (strain ATCC 51907 / DSM 11121 / KW20 / Rd).